The sequence spans 671 residues: Pescadillo homolog (671 aa).

Positions 317-403 constitute a BRCT domain; it reads KVRELFRGLT…LMLPVTGYRI (87 aa). Positions 548–584 form a coiled coil; it reads QALRKAQEKSRQTETSEARLQRKMSEVKRQEAATRKM. Disordered stretches follow at residues 552–578 and 643–671; these read KAQE…KRQE and RRQR…KWVQ.

This sequence belongs to the pescadillo family.

The protein resides in the nucleus. It localises to the nucleolus. The protein localises to the nucleoplasm. Functionally, required for maturation of ribosomal RNAs and formation of the large ribosomal subunit. In Leishmania infantum, this protein is Pescadillo homolog.